The primary structure comprises 223 residues: Cytochrome c biogenesis ATP-binding export protein CcmA (223 aa).

One can recognise an ABC transporter domain in the interval 1–223 (MRSLACERDE…KSDMAVGNDY (223 aa)). ATP is bound at residue 31–38 (GSNGAGKT).

This sequence belongs to the ABC transporter superfamily. CcmA exporter (TC 3.A.1.107) family. As to quaternary structure, the complex is composed of two ATP-binding proteins (CcmA) and two transmembrane proteins (CcmB).

Its subcellular location is the cell inner membrane. The catalysed reaction is heme b(in) + ATP + H2O = heme b(out) + ADP + phosphate + H(+). Its function is as follows. Part of the ABC transporter complex CcmAB involved in the biogenesis of c-type cytochromes; once thought to export heme, this seems not to be the case, but its exact role is uncertain. Responsible for energy coupling to the transport system. The protein is Cytochrome c biogenesis ATP-binding export protein CcmA of Saccharophagus degradans (strain 2-40 / ATCC 43961 / DSM 17024).